The primary structure comprises 674 residues: Carbon monoxide dehydrogenase/acetyl-CoA synthase subunit beta (674 aa).

The segment at M1–R25 is disordered. [4Fe-4S] cluster contacts are provided by C59, C67, C68, C71, C76, and C90. [Ni-4Fe-4S] cluster-binding residues include H283, C317, C355, C470, C500, and C550.

As to quaternary structure, tetramer of two alpha and two beta chains. The cofactor is [Ni-Fe-S] cluster. It depends on [4Fe-4S] cluster as a cofactor.

It catalyses the reaction CO + 2 oxidized [2Fe-2S]-[ferredoxin] + H2O = 2 reduced [2Fe-2S]-[ferredoxin] + CO2 + 2 H(+). Its function is as follows. The beta subunit (this protein) generates CO from CO(2), while the alpha subunit combines the CO with CoA and a methyl group to form acetyl-CoA. The methyl group, which is incorporated into acetyl-CoA, is transferred to the alpha subunit by a corrinoid iron-sulfur protein. The protein is Carbon monoxide dehydrogenase/acetyl-CoA synthase subunit beta of Moorella thermoacetica (Clostridium thermoaceticum).